Consider the following 117-residue polypeptide: Putative iron-sulfur cluster insertion protein ErpA (117 aa).

The iron-sulfur cluster site is built by Cys-45, Cys-109, and Cys-111.

The protein belongs to the HesB/IscA family. Homodimer. Requires iron-sulfur cluster as cofactor.

Required for insertion of 4Fe-4S clusters. The protein is Putative iron-sulfur cluster insertion protein ErpA of Methylobacillus flagellatus (strain ATCC 51484 / DSM 6875 / VKM B-1610 / KT).